The sequence spans 250 residues: Bcl-2-like protein 12 (250 aa).

Positions Gly-24–Phe-46 are disordered. A Phosphoserine modification is found at Ser-29. The residue at position 33 (Thr-33) is a Phosphothreonine. Ser-37 carries the post-translational modification Phosphoserine. Omega-N-methylarginine is present on Arg-60. Ser-111, Ser-158, Ser-159, Ser-161, and Ser-189 each carry phosphoserine. A BH2 motif is present at residues Trp-227–Leu-238.

It belongs to the Bcl-2 family. Expressed mainly in breast, thymus, prostate, fetal liver, colon, placenta, pancreas, small intestine, spinal cord, kidney, and bone marrow and to a lesser extent in many other tissues. Isoform 2 is primarily expressed in skeletal muscle.

This chain is Bcl-2-like protein 12, found in Homo sapiens (Human).